The sequence spans 400 residues: CinA-like protein (400 aa).

It belongs to the CinA family.

In Escherichia coli (strain K12 / MC4100 / BW2952), this protein is CinA-like protein.